Reading from the N-terminus, the 977-residue chain is Kinesin-like protein KIN-14D (977 aa).

Residues 1-13 (MSSSNNAAAAAAS) show a composition bias toward low complexity. The tract at residues 1 to 20 (MSSSNNAAAAAASPDPSRRR) is disordered. The Calponin-homology (CH) domain maps to 17–118 (SRRREDVVGW…CILALKDRFG (102 aa)). A coiled-coil region spans residues 297–384 (KAEETQRIED…TKRRIELEEL (88 aa)). One can recognise a Kinesin motor domain in the interval 472 to 800 (NIRVYCRIRP…LKFAERVSGV (329 aa)). Residue 556-563 (GQTGSGKT) participates in ATP binding. The stretch at 812–847 (KEGKDVKELMDQLSLLKDTISKKDEEIDRLQLLNSS) forms a coiled coil. Positions 852–977 (PTRQADSVLK…RNNSTLKRGP (126 aa)) are disordered. 2 stretches are compositionally biased toward polar residues: residues 861–879 (KHSSSSPGITSLGKGTSVG) and 956–977 (RKSSTSQATPLARNNSTLKRGP).

Belongs to the TRAFAC class myosin-kinesin ATPase superfamily. Kinesin family. KIN-14 subfamily.

The sequence is that of Kinesin-like protein KIN-14D from Oryza sativa subsp. japonica (Rice).